Here is a 380-residue protein sequence, read N- to C-terminus: Succinyl-diaminopimelate desuccinylase (380 aa).

Histidine 70 contributes to the Zn(2+) binding site. Aspartate 72 is a catalytic residue. Aspartate 103 contacts Zn(2+). Catalysis depends on glutamate 137, which acts as the Proton acceptor. 3 residues coordinate Zn(2+): glutamate 138, glutamate 166, and histidine 352.

Belongs to the peptidase M20A family. DapE subfamily. Homodimer. Requires Zn(2+) as cofactor. It depends on Co(2+) as a cofactor.

It carries out the reaction N-succinyl-(2S,6S)-2,6-diaminopimelate + H2O = (2S,6S)-2,6-diaminopimelate + succinate. Its pathway is amino-acid biosynthesis; L-lysine biosynthesis via DAP pathway; LL-2,6-diaminopimelate from (S)-tetrahydrodipicolinate (succinylase route): step 3/3. Its function is as follows. Catalyzes the hydrolysis of N-succinyl-L,L-diaminopimelic acid (SDAP), forming succinate and LL-2,6-diaminopimelate (DAP), an intermediate involved in the bacterial biosynthesis of lysine and meso-diaminopimelic acid, an essential component of bacterial cell walls. The protein is Succinyl-diaminopimelate desuccinylase of Azoarcus sp. (strain BH72).